Here is a 413-residue protein sequence, read N- to C-terminus: Tryptophan synthase beta chain (413 aa).

Lysine 107 is modified (N6-(pyridoxal phosphate)lysine).

It belongs to the TrpB family. As to quaternary structure, tetramer of two alpha and two beta chains. Pyridoxal 5'-phosphate serves as cofactor.

It carries out the reaction (1S,2R)-1-C-(indol-3-yl)glycerol 3-phosphate + L-serine = D-glyceraldehyde 3-phosphate + L-tryptophan + H2O. The protein operates within amino-acid biosynthesis; L-tryptophan biosynthesis; L-tryptophan from chorismate: step 5/5. In terms of biological role, the beta subunit is responsible for the synthesis of L-tryptophan from indole and L-serine. This chain is Tryptophan synthase beta chain, found in Trichormus variabilis (strain ATCC 29413 / PCC 7937) (Anabaena variabilis).